The chain runs to 203 residues: Large ribosomal subunit protein uL13 (203 aa).

Ala-2 bears the N-acetylalanine mark. Arg-59 is subject to Citrulline. Residue Ser-77 is modified to Phosphoserine. The residue at position 140 (Arg-140) is a Citrulline. Residue Lys-191 is modified to N6-acetyllysine.

It belongs to the universal ribosomal protein uL13 family. As to quaternary structure, component of the 60S ribosome. Component of the GAIT complex. Interacts with EIF4G1. In terms of processing, phosphorylation at Ser-77 upon interferon-gamma treatment in macrophages involves a DAPK1-DAPK3 kinase cascade and is causing release from the ribosome, association with the GAIT complex and subsequent involvement in transcript-selective translation inhibition. Citrullinated by PADI4.

The protein localises to the cytoplasm. Associated with ribosomes but is not required for canonical ribosome function and has extra-ribosomal functions. Component of the GAIT (gamma interferon-activated inhibitor of translation) complex which mediates interferon-gamma-induced transcript-selective translation inhibition in inflammation processes. Upon interferon-gamma activation and subsequent phosphorylation dissociates from the ribosome and assembles into the GAIT complex which binds to stem loop-containing GAIT elements in the 3'-UTR of diverse inflammatory mRNAs (such as ceruplasmin) and suppresses their translation. In the GAIT complex interacts with m7G cap-bound eIF4G at or near the eIF3-binding site and blocks the recruitment of the 43S ribosomal complex. Involved in methylation of rRNA. In Canis lupus familiaris (Dog), this protein is Large ribosomal subunit protein uL13 (RPL13A).